A 301-amino-acid polypeptide reads, in one-letter code: Asialoglycoprotein receptor 2 (301 aa).

A disordered region spans residues 1–43 (MEKDCQDIQQLDSEENDHQLSGDDEHGSHVQDPRIENPHWKGQ). At 1–58 (MEKDCQDIQQLDSEENDHQLSGDDEHGSHVQDPRIENPHWKGQPLSRPFPQRLCSTFR) the chain is on the cytoplasmic side. Phosphoserine is present on Ser-13. A compositionally biased stretch (basic and acidic residues) spans 16-39 (NDHQLSGDDEHGSHVQDPRIENPH). Cys-54 carries S-palmitoyl cysteine lipidation. Residues 59–79 (LSLLALAFNILLLVVICVVSS) form a helical; Signal-anchor for type II membrane protein membrane-spanning segment. Residues 80–301 (QSIQLQEEFR…VCEKRRNITH (222 aa)) lie on the Extracellular side of the membrane. Residues Asn-97 and Asn-165 are each glycosylated (N-linked (GlcNAc...) asparagine). The 127-residue stretch at 169-295 (CCPVNWVEFG…QQVNRWVCEK (127 aa)) folds into the C-type lectin domain. 3 cysteine pairs are disulfide-bonded: Cys-170–Cys-181, Cys-198–Cys-293, and Cys-271–Cys-285. Asn-298 carries N-linked (GlcNAc...) asparagine glycosylation.

Interacts with LASS2. In terms of tissue distribution, expressed exclusively in hepatic parenchymal cells.

The protein localises to the membrane. Mediates the endocytosis of plasma glycoproteins to which the terminal sialic acid residue on their complex carbohydrate moieties has been removed. The receptor recognizes terminal galactose and N-acetylgalactosamine units. After ligand binding to the receptor, the resulting complex is internalized and transported to a sorting organelle, where receptor and ligand are disassociated. The receptor then returns to the cell membrane surface. This chain is Asialoglycoprotein receptor 2 (Asgr2), found in Mus musculus (Mouse).